Consider the following 318-residue polypeptide: D-alanine--D-alanine ligase (318 aa).

The ATP-grasp domain maps to 117–315 (KQVWLSLGLS…FETLVWRVLE (199 aa)). 146–201 (ARQIGLPIIVKPANEGSSVGVSRVFDQAQLEEAVTLAARYDGALLMEQLIEGDELT) lines the ATP pocket. Positions 268, 282, and 284 each coordinate Mg(2+).

The protein belongs to the D-alanine--D-alanine ligase family. The cofactor is Mg(2+). Mn(2+) is required as a cofactor.

The protein localises to the cytoplasm. The enzyme catalyses 2 D-alanine + ATP = D-alanyl-D-alanine + ADP + phosphate + H(+). It functions in the pathway cell wall biogenesis; peptidoglycan biosynthesis. Its function is as follows. Cell wall formation. This Xanthomonas axonopodis pv. citri (strain 306) protein is D-alanine--D-alanine ligase.